Consider the following 670-residue polypeptide: DNA topoisomerase 6 subunit B (670 aa).

A disordered region spans residues 1–30 (MAGDDLVETKKGSSKNSKDSNESKLKQKSP). A compositionally biased stretch (basic and acidic residues) spans 7–25 (VETKKGSSKNSKDSNESKL). ATP contacts are provided by residues asparagine 60, aspartate 160, 181 to 182 (TK), 190 to 197 (GKFGLGAK), and lysine 516.

Belongs to the TOP6B family. Homodimer. Heterotetramer of two TOP6A and two TOP6B subunits. Interacts with SPO11-2, but not with SPO11-1, RHL1 or BIN4. Highly expressed in leaves, stems, flowers and seedlings.

It localises to the nucleus. It carries out the reaction ATP-dependent breakage, passage and rejoining of double-stranded DNA.. Its function is as follows. Component of the DNA topoisomerase VI involved in chromatin organization and progression of endoreduplication cycles. Relaxes both positive and negative superturns and exhibits a strong decatenase activity. The B subunit binds ATP. Involved in cell-elongation processes. In Arabidopsis thaliana (Mouse-ear cress), this protein is DNA topoisomerase 6 subunit B.